The chain runs to 162 residues: UPF0303 protein RL3365 (162 aa).

The protein belongs to the UPF0303 family.

The chain is UPF0303 protein RL3365 from Rhizobium johnstonii (strain DSM 114642 / LMG 32736 / 3841) (Rhizobium leguminosarum bv. viciae).